The following is a 474-amino-acid chain: Probable cytosol aminopeptidase (474 aa).

K237 and D242 together coordinate Mn(2+). K249 is an active-site residue. The Mn(2+) site is built by D260, D319, and E321. The active site involves R323.

This sequence belongs to the peptidase M17 family. Mn(2+) serves as cofactor.

It localises to the cytoplasm. The enzyme catalyses Release of an N-terminal amino acid, Xaa-|-Yaa-, in which Xaa is preferably Leu, but may be other amino acids including Pro although not Arg or Lys, and Yaa may be Pro. Amino acid amides and methyl esters are also readily hydrolyzed, but rates on arylamides are exceedingly low.. The catalysed reaction is Release of an N-terminal amino acid, preferentially leucine, but not glutamic or aspartic acids.. Its function is as follows. Presumably involved in the processing and regular turnover of intracellular proteins. Catalyzes the removal of unsubstituted N-terminal amino acids from various peptides. This is Probable cytosol aminopeptidase from Helicobacter hepaticus (strain ATCC 51449 / 3B1).